A 760-amino-acid chain; its full sequence is Ferric/cupric reductase transmembrane component 1 (760 aa).

An N-terminal signal peptide occupies residues 1-18 (MKIQQLIVFLFAVVLIDA). Residues 19–212 (RTPKRYSELD…NNNFNLSINY (194 aa)) lie on the Extracellular side of the membrane. 6 N-linked (GlcNAc...) asparagine glycosylation sites follow: Asn78, Asn91, Asn111, Asn143, Asn155, and Asn207. Positions 119-177 (TTKSSSGSKTSASASKSSKSTGSSNASKSSTNAHGSNSSTSSTSSSSSKSGKGNSGTST) are disordered. A helical transmembrane segment spans residues 213–233 (GSGLLGYWAGILAIAIFANMI). Residues 234 to 288 (KKMFPSLTNYLSGSISNLFRKHLFLPATFRKKKAQEFSIGVYGFFDGLIPTRLET) lie on the Cytoplasmic side of the membrane. Residues 289 to 309 (IIVVIFVVLTGLFSALHIHHV) form a helical membrane-spanning segment. Over 310-324 (KDNPQYATKNAELGH) the chain is Extracellular. The helical transmembrane segment at 325–345 (LIADRTGILGTFLIPLLILFG) threads the bilayer. The 116-residue stretch at 330–445 (TGILGTFLIP…HIVLVVFFVV (116 aa)) folds into the Ferric oxidoreductase domain. The Cytoplasmic portion of the chain corresponds to 346–371 (GRNNFLQWLTGWDFATFIMYHRWISR). Heme is bound by residues His366 and His380. Residues 372–392 (VDVLLIIVHAITFSVSDKATG) traverse the membrane as a helical segment. At 393–403 (KYNTRMKRDFM) the chain is on the extracellular side. The chain crosses the membrane as a helical span at residues 404–424 (IWGTVSTICGGFILFQAMLFF). The Cytoplasmic segment spans residues 425–430 (RRKCYE). Residues 431–451 (VFFLIHIVLVVFFVVGGYYHL) form a helical membrane-spanning segment. Heme contacts are provided by His436 and His450. The Extracellular portion of the chain corresponds to 452–760 (ESQGYGDFMW…EYHEQLQTWA (309 aa)). Residues 465–583 (AVWAFDRVVR…EGPYGEPSSA (119 aa)) enclose the FAD-binding FR-type domain. Position 575-578 (575-578 (GPYG)) interacts with NADP(+). Asn615 is a glycosylation site (N-linked (GlcNAc...) asparagine). 726 to 727 (CG) lines the NADP(+) pocket. Asn744 is a glycosylation site (N-linked (GlcNAc...) asparagine).

The protein belongs to the ferric reductase (FRE) family. FAD serves as cofactor. The cofactor is heme.

The protein localises to the cell membrane. The catalysed reaction is 2 a Fe(II)-siderophore + NADP(+) + H(+) = 2 a Fe(III)-siderophore + NADPH. Its function is as follows. Ferric reductase responsible for reducing extracellular iron and copper prior to import. Catalyzes the reductive uptake of Fe(3+)-salts and Fe(3+) bound to catecholate or hydroxamate siderophores. Fe(3+) is reduced to Fe(2+), which then dissociates from the siderophore and can be imported by the high-affinity Fe(2+) transport complex in the plasma membrane. Also participates in Cu(2+) reduction and Cu(+) uptake. Involved in maintenance of cell wall integrity (CWI), mitochondrial function, and interaction between the pathogen and the host. The protein is Ferric/cupric reductase transmembrane component 1 of Candida albicans (strain SC5314 / ATCC MYA-2876) (Yeast).